A 459-amino-acid chain; its full sequence is Cysteine--tRNA ligase (459 aa).

Cysteine 31 is a Zn(2+) binding site. A 'HIGH' region motif is present at residues 33–43; the sequence is PTVYYNPHIGN. Residues cysteine 216, histidine 241, and glutamate 245 each contribute to the Zn(2+) site. The short motif at 274-278 is the 'KMSKS' region element; that stretch reads KMSKS. Lysine 277 is a binding site for ATP.

Belongs to the class-I aminoacyl-tRNA synthetase family. In terms of assembly, monomer. Zn(2+) serves as cofactor.

Its subcellular location is the cytoplasm. It carries out the reaction tRNA(Cys) + L-cysteine + ATP = L-cysteinyl-tRNA(Cys) + AMP + diphosphate. The chain is Cysteine--tRNA ligase from Rickettsia conorii (strain ATCC VR-613 / Malish 7).